Consider the following 1216-residue polypeptide: ATP-dependent helicase/nuclease subunit A (1216 aa).

The UvrD-like helicase ATP-binding domain occupies 26-488; that stretch reads QKKTAEQIEA…ILLKENFRSS (463 aa). ATP is bound at residue 47 to 54; sequence ASAGSGKT. Residues 515–802 enclose the UvrD-like helicase C-terminal domain; it reads KHQLVFANTK…ELMTIHKSKG (288 aa).

Belongs to the helicase family. AddA subfamily. Heterodimer of AddA and AddB/RexB. The cofactor is Mg(2+).

It catalyses the reaction Couples ATP hydrolysis with the unwinding of duplex DNA by translocating in the 3'-5' direction.. The catalysed reaction is ATP + H2O = ADP + phosphate + H(+). Functionally, the heterodimer acts as both an ATP-dependent DNA helicase and an ATP-dependent, dual-direction single-stranded exonuclease. Recognizes the chi site generating a DNA molecule suitable for the initiation of homologous recombination. The AddA nuclease domain is required for chi fragment generation; this subunit has the helicase and 3' -&gt; 5' nuclease activities. This is ATP-dependent helicase/nuclease subunit A from Streptococcus pneumoniae (strain Hungary19A-6).